A 93-amino-acid chain; its full sequence is Small ribosomal subunit protein uS19 (93 aa).

Belongs to the universal ribosomal protein uS19 family.

Functionally, protein S19 forms a complex with S13 that binds strongly to the 16S ribosomal RNA. The polypeptide is Small ribosomal subunit protein uS19 (Karelsulcia muelleri (strain GWSS) (Sulcia muelleri)).